A 273-amino-acid chain; its full sequence is Putative carboxymethylenebutenolidase (273 aa).

Residues C130, D191, and H223 contribute to the active site.

The protein belongs to the dienelactone hydrolase family.

The catalysed reaction is 2-(5-oxo-2,5-dihydrofuran-2-ylidene)acetate + H2O = 4-oxohex-2-enedioate + H(+). This Saccharomyces cerevisiae (strain ATCC 204508 / S288c) (Baker's yeast) protein is Putative carboxymethylenebutenolidase.